A 362-amino-acid chain; its full sequence is Flagellar P-ring protein (362 aa).

The first 18 residues, 1–18 (MKHIALIVLYFLSFSVQA), serve as a signal peptide directing secretion.

It belongs to the FlgI family. In terms of assembly, the basal body constitutes a major portion of the flagellar organelle and consists of four rings (L,P,S, and M) mounted on a central rod.

It localises to the periplasm. The protein resides in the bacterial flagellum basal body. Functionally, assembles around the rod to form the L-ring and probably protects the motor/basal body from shearing forces during rotation. This Marinomonas sp. (strain MWYL1) protein is Flagellar P-ring protein.